The sequence spans 493 residues: Intermediate cleaving peptidase 55, mitochondrial (493 aa).

The N-terminal 19 residues, 1-19 (MQFLARNLVRRVSRTQVVS), are a transit peptide targeting the mitochondrion. Positions 296, 307, 383, 410, and 433 each coordinate Mn(2+).

The protein belongs to the peptidase M24B family. It depends on Mn(2+) as a cofactor.

Its subcellular location is the mitochondrion. It localises to the nucleus. Its function is as follows. Aminopeptidase which cleaves preprotein intermediates that carry destabilizing N-ter amino acid residues after the mitochondrial processing peptidase (MPP) cleavage site and is thus critical for stabilization of the mitochondrial proteome. The polypeptide is Intermediate cleaving peptidase 55, mitochondrial (Arabidopsis thaliana (Mouse-ear cress)).